The sequence spans 454 residues: Glutamyl-tRNA reductase (454 aa).

Substrate-binding positions include 49–52 (TCNR), Ser109, 114–116 (ETQ), and Gln120. Cys50 functions as the Nucleophile in the catalytic mechanism. Residue 189 to 194 (GAGKMS) coordinates NADP(+). Positions 432–442 (DHAEQSWKEGQ) are enriched in basic and acidic residues. Residues 432-454 (DHAEQSWKEGQRPSLNQGMALRT) are disordered.

The protein belongs to the glutamyl-tRNA reductase family. As to quaternary structure, homodimer.

The enzyme catalyses (S)-4-amino-5-oxopentanoate + tRNA(Glu) + NADP(+) = L-glutamyl-tRNA(Glu) + NADPH + H(+). The protein operates within porphyrin-containing compound metabolism; protoporphyrin-IX biosynthesis; 5-aminolevulinate from L-glutamyl-tRNA(Glu): step 1/2. In terms of biological role, catalyzes the NADPH-dependent reduction of glutamyl-tRNA(Glu) to glutamate 1-semialdehyde (GSA). In Shouchella clausii (strain KSM-K16) (Alkalihalobacillus clausii), this protein is Glutamyl-tRNA reductase.